A 342-amino-acid polypeptide reads, in one-letter code: Biotin synthase (342 aa).

A Radical SAM core domain is found at 38 to 262 (GQVQISTLLS…MMPTSYVRLS (225 aa)). The [4Fe-4S] cluster site is built by Cys53, Cys57, and Cys60. Residues Cys97, Cys128, Cys188, and Arg260 each contribute to the [2Fe-2S] cluster site.

Belongs to the radical SAM superfamily. Biotin synthase family. Homodimer. [4Fe-4S] cluster serves as cofactor. It depends on [2Fe-2S] cluster as a cofactor.

It catalyses the reaction (4R,5S)-dethiobiotin + (sulfur carrier)-SH + 2 reduced [2Fe-2S]-[ferredoxin] + 2 S-adenosyl-L-methionine = (sulfur carrier)-H + biotin + 2 5'-deoxyadenosine + 2 L-methionine + 2 oxidized [2Fe-2S]-[ferredoxin]. The protein operates within cofactor biosynthesis; biotin biosynthesis; biotin from 7,8-diaminononanoate: step 2/2. Functionally, catalyzes the conversion of dethiobiotin (DTB) to biotin by the insertion of a sulfur atom into dethiobiotin via a radical-based mechanism. This chain is Biotin synthase, found in Baumannia cicadellinicola subsp. Homalodisca coagulata.